Reading from the N-terminus, the 535-residue chain is CTP synthase (535 aa).

The interval 1–267 is amidoligase domain; it reads MTKYIFVTGG…DKLVCEHMKL (267 aa). S13 is a binding site for CTP. Residue S13 coordinates UTP. Position 14–19 (14–19) interacts with ATP; sequence SLGKGI. Y54 lines the L-glutamine pocket. ATP is bound at residue D71. D71 and E141 together coordinate Mg(2+). Residues 148 to 150, 188 to 193, and K224 each bind CTP; these read DIE and KTKPTQ. UTP contacts are provided by residues 188-193 and K224; that span reads KTKPTQ. Residues 292–534 form the Glutamine amidotransferase type-1 domain; sequence TIGLVGKYVE…VGASLQASES (243 aa). L-glutamine is bound at residue G354. C381 (nucleophile; for glutamine hydrolysis) is an active-site residue. L-glutamine is bound by residues 382 to 385, E405, and R462; that span reads LGMQ. Catalysis depends on residues H507 and E509.

Belongs to the CTP synthase family. As to quaternary structure, homotetramer.

It carries out the reaction UTP + L-glutamine + ATP + H2O = CTP + L-glutamate + ADP + phosphate + 2 H(+). It catalyses the reaction L-glutamine + H2O = L-glutamate + NH4(+). The enzyme catalyses UTP + NH4(+) + ATP = CTP + ADP + phosphate + 2 H(+). It participates in pyrimidine metabolism; CTP biosynthesis via de novo pathway; CTP from UDP: step 2/2. Allosterically activated by GTP, when glutamine is the substrate; GTP has no effect on the reaction when ammonia is the substrate. The allosteric effector GTP functions by stabilizing the protein conformation that binds the tetrahedral intermediate(s) formed during glutamine hydrolysis. Inhibited by the product CTP, via allosteric rather than competitive inhibition. Catalyzes the ATP-dependent amination of UTP to CTP with either L-glutamine or ammonia as the source of nitrogen. Regulates intracellular CTP levels through interactions with the four ribonucleotide triphosphates. In Bacillus pumilus (strain SAFR-032), this protein is CTP synthase.